The following is a 150-amino-acid chain: Large ribosomal subunit protein bL9 (150 aa).

This sequence belongs to the bacterial ribosomal protein bL9 family.

Binds to the 23S rRNA. The protein is Large ribosomal subunit protein bL9 of Shewanella frigidimarina (strain NCIMB 400).